A 184-amino-acid chain; its full sequence is Ribosome maturation factor RimM (184 aa).

Residues 105–184 (EDEFYWRELF…RIEVDWDPAF (80 aa)) form the PRC barrel domain.

Belongs to the RimM family. As to quaternary structure, binds ribosomal protein uS19.

Its subcellular location is the cytoplasm. Functionally, an accessory protein needed during the final step in the assembly of 30S ribosomal subunit, possibly for assembly of the head region. Essential for efficient processing of 16S rRNA. May be needed both before and after RbfA during the maturation of 16S rRNA. It has affinity for free ribosomal 30S subunits but not for 70S ribosomes. This is Ribosome maturation factor RimM from Vibrio cholerae serotype O1 (strain ATCC 39541 / Classical Ogawa 395 / O395).